The primary structure comprises 386 residues: Succinate--CoA ligase [ADP-forming] subunit beta (386 aa).

Residues Lys46, Gly53–Gly55, Glu99, Ala102, and Glu107 each bind ATP. Residues Asn199 and Asp213 each contribute to the Mg(2+) site. Residues Asn264 and Gly321–Val323 contribute to the substrate site.

Belongs to the succinate/malate CoA ligase beta subunit family. In terms of assembly, heterotetramer of two alpha and two beta subunits. Mg(2+) is required as a cofactor.

The catalysed reaction is succinate + ATP + CoA = succinyl-CoA + ADP + phosphate. The enzyme catalyses GTP + succinate + CoA = succinyl-CoA + GDP + phosphate. It participates in carbohydrate metabolism; tricarboxylic acid cycle; succinate from succinyl-CoA (ligase route): step 1/1. Succinyl-CoA synthetase functions in the citric acid cycle (TCA), coupling the hydrolysis of succinyl-CoA to the synthesis of either ATP or GTP and thus represents the only step of substrate-level phosphorylation in the TCA. The beta subunit provides nucleotide specificity of the enzyme and binds the substrate succinate, while the binding sites for coenzyme A and phosphate are found in the alpha subunit. This chain is Succinate--CoA ligase [ADP-forming] subunit beta, found in Actinobacillus succinogenes (strain ATCC 55618 / DSM 22257 / CCUG 43843 / 130Z).